The sequence spans 40 residues: Photosystem II reaction center protein J (40 aa).

The helical transmembrane segment at 8 to 28 (IPLWLIGTVAGIAVIGLVGVF) threads the bilayer.

The protein belongs to the PsbJ family. In terms of assembly, PSII is composed of 1 copy each of membrane proteins PsbA, PsbB, PsbC, PsbD, PsbE, PsbF, PsbH, PsbI, PsbJ, PsbK, PsbL, PsbM, PsbT, PsbX, PsbY, PsbZ, Psb30/Ycf12, at least 3 peripheral proteins of the oxygen-evolving complex and a large number of cofactors. It forms dimeric complexes.

It is found in the plastid. The protein resides in the chloroplast thylakoid membrane. Functionally, one of the components of the core complex of photosystem II (PSII). PSII is a light-driven water:plastoquinone oxidoreductase that uses light energy to abstract electrons from H(2)O, generating O(2) and a proton gradient subsequently used for ATP formation. It consists of a core antenna complex that captures photons, and an electron transfer chain that converts photonic excitation into a charge separation. The chain is Photosystem II reaction center protein J from Secale cereale (Rye).